The chain runs to 2170 residues: ATP-binding cassette sub-family A member 7 (2170 aa).

Residues 22 to 42 traverse the membrane as a helical segment; it reads PIQLVVELLWPLFLFFILVAV. Over 43 to 547 the chain is Extracellular; the sequence is RHSHPPLEHH…DVFLRVLSRS (505 aa). Cysteine 75 and cysteine 222 are joined by a disulfide. Residue asparagine 309 is glycosylated (N-linked (GlcNAc...) asparagine). 6 consecutive transmembrane segments (helical) span residues 548–568, 591–611, 624–644, 653–673, 679–699, and 733–753; these read LPLFLTLAWIYSVALTVKAVV, LGWFLSCLGPFLVSAALLVLV, VVVFLFLAAFAVATVAQSFLL, LAAACGGLAYFALYLPYVLCV, LPLGGLLAVSLLSPVAFGFGC, and AFLLLDAVIYGLALWYLEAVC. Residues 805–1036 enclose the ABC transporter 1 domain; sequence VSIRGLKKHF…LGCGYYLTLV (232 aa). An ATP-binding site is contributed by 839–846; that stretch reads GHNGAGKT. Residues 847 to 867 form a helical membrane-spanning segment; sequence TTLSILSGLFPPSSGSASILG. Residues 1044 to 1086 are disordered; that stretch reads THDLKGDTEDPRREKKSGSEGKTADTVLTRDGPHRSSQVPAPD. Positions 1045 to 1066 are enriched in basic and acidic residues; the sequence is HDLKGDTEDPRREKKSGSEGKT. Residues 1257 to 1277 form a helical membrane-spanning segment; it reads IVLPALFVGLALFFTLIVPPF. The Extracellular segment spans residues 1278–1562; the sequence is GQYPPLQLSP…TLIASSVDVL (285 aa). An intrachain disulfide couples cysteine 1370 to cysteine 1384. Transmembrane regions (helical) follow at residues 1563–1583, 1609–1629, 1646–1666, 1674–1694, 1708–1728, and 1754–1774; these read VSICVVFAMSFVPASFTLVLI, FLWDMCNYLVAVCIVVLIFLA, LLLLLYGWSITPLMYPASFFF, VVLTCINLFIGINSSMATFVL, ILKQVFLIFPHFCLGRGLIDM, and IIGKNLLAMVAQGPLFLLITL. In terms of domain architecture, ABC transporter 2 spans 1818–2050; the sequence is LVLRDLTKVY…FGAGHTLTLR (233 aa). Residue 1852 to 1859 coordinates ATP; it reads GVNGAGKT. The interval 2129 to 2170 is disordered; the sequence is QGEEEEGSGQETETREVSTPGLQHPKRVSRFLEDPSSVETVI.

It belongs to the ABC transporter superfamily. ABCA family. Post-translationally, N-glycosylated. Expressed in blood cells. Also detected in brain and ovary tissues (at protein level). Expressed in platelet.

The protein resides in the cell membrane. Its subcellular location is the golgi apparatus membrane. It is found in the early endosome membrane. The protein localises to the cell projection. It localises to the ruffle membrane. The protein resides in the phagocytic cup. Its subcellular location is the cytoplasm. Its function is as follows. ATP-binding cassette (ABC) transporter that plays a role in lipid homeostasis and macrophage-mediated phagocytosis. Binds APOA1 and may function in apolipoprotein-mediated phospholipid efflux from cells. May also mediate cholesterol efflux. May regulate cellular ceramide homeostasis during keratinocyte differentiation. Involved in lipid raft organization and CD1D localization on thymocytes and antigen-presenting cells, which plays an important role in natural killer T-cell development and activation. Plays a role in phagocytosis of apoptotic cells by macrophages. Macrophage phagocytosis is stimulated by APOA1 or APOA2, probably by stabilization of ABCA7. Also involved in phagocytic clearance of amyloid-beta by microglia cells and macrophages. Further limits amyloid-beta production by playing a role in the regulation of amyloid-beta A4 precursor protein (APP) endocytosis and/or processing. This is ATP-binding cassette sub-family A member 7 (Abca7) from Rattus norvegicus (Rat).